We begin with the raw amino-acid sequence, 151 residues long: MKHVDIFTDGACSGNPGPGGWGAVLRYGEVEKELCGGEAETTNNRMELMAAISALQALKSPCEVDLYTDSAYVKDGISKWIFGWKKNGWKTSDKKPVKNAELWQALEEARNRHKVTLHWVKGHAGHPENERADELARRGMEPFKKGKAVSF.

Residues 1–141 (MKHVDIFTDG…ADELARRGME (141 aa)) enclose the RNase H type-1 domain. Mg(2+) is bound by residues Asp9, Glu47, Asp69, and Asp133.

Belongs to the RNase H family. Monomer. Requires Mg(2+) as cofactor.

The protein localises to the cytoplasm. The enzyme catalyses Endonucleolytic cleavage to 5'-phosphomonoester.. Endonuclease that specifically degrades the RNA of RNA-DNA hybrids. This Rhizobium etli (strain ATCC 51251 / DSM 11541 / JCM 21823 / NBRC 15573 / CFN 42) protein is Ribonuclease H.